The following is a 135-amino-acid chain: Large ribosomal subunit protein bL17 (135 aa).

The protein belongs to the bacterial ribosomal protein bL17 family. Part of the 50S ribosomal subunit. Contacts protein L32.

The sequence is that of Large ribosomal subunit protein bL17 from Listeria welshimeri serovar 6b (strain ATCC 35897 / DSM 20650 / CCUG 15529 / CIP 8149 / NCTC 11857 / SLCC 5334 / V8).